A 385-amino-acid polypeptide reads, in one-letter code: Probable tRNA sulfurtransferase (385 aa).

The 104-residue stretch at Asp-57–Lys-160 folds into the THUMP domain. ATP-binding positions include Met-180–Leu-181, Tyr-205–Tyr-206, Arg-262, Gly-284, and Gln-293.

It belongs to the ThiI family.

It localises to the cytoplasm. The catalysed reaction is [ThiI sulfur-carrier protein]-S-sulfanyl-L-cysteine + a uridine in tRNA + 2 reduced [2Fe-2S]-[ferredoxin] + ATP + H(+) = [ThiI sulfur-carrier protein]-L-cysteine + a 4-thiouridine in tRNA + 2 oxidized [2Fe-2S]-[ferredoxin] + AMP + diphosphate. The enzyme catalyses [ThiS sulfur-carrier protein]-C-terminal Gly-Gly-AMP + S-sulfanyl-L-cysteinyl-[cysteine desulfurase] + AH2 = [ThiS sulfur-carrier protein]-C-terminal-Gly-aminoethanethioate + L-cysteinyl-[cysteine desulfurase] + A + AMP + 2 H(+). It participates in cofactor biosynthesis; thiamine diphosphate biosynthesis. Catalyzes the ATP-dependent transfer of a sulfur to tRNA to produce 4-thiouridine in position 8 of tRNAs, which functions as a near-UV photosensor. Also catalyzes the transfer of sulfur to the sulfur carrier protein ThiS, forming ThiS-thiocarboxylate. This is a step in the synthesis of thiazole, in the thiamine biosynthesis pathway. The sulfur is donated as persulfide by IscS. This Clostridium perfringens (strain 13 / Type A) protein is Probable tRNA sulfurtransferase.